The sequence spans 154 residues: 6,7-dimethyl-8-ribityllumazine synthase (154 aa).

5-amino-6-(D-ribitylamino)uracil is bound by residues Phe21, 55-57 (AFE), and 79-81 (CVI). 84-85 (AT) lines the (2S)-2-hydroxy-3-oxobutyl phosphate pocket. His87 (proton donor) is an active-site residue. Phe112 contacts 5-amino-6-(D-ribitylamino)uracil. A (2S)-2-hydroxy-3-oxobutyl phosphate-binding site is contributed by Arg126.

The protein belongs to the DMRL synthase family. Forms an icosahedral capsid composed of 60 subunits, arranged as a dodecamer of pentamers.

It carries out the reaction (2S)-2-hydroxy-3-oxobutyl phosphate + 5-amino-6-(D-ribitylamino)uracil = 6,7-dimethyl-8-(1-D-ribityl)lumazine + phosphate + 2 H2O + H(+). It participates in cofactor biosynthesis; riboflavin biosynthesis; riboflavin from 2-hydroxy-3-oxobutyl phosphate and 5-amino-6-(D-ribitylamino)uracil: step 1/2. Catalyzes the formation of 6,7-dimethyl-8-ribityllumazine by condensation of 5-amino-6-(D-ribitylamino)uracil with 3,4-dihydroxy-2-butanone 4-phosphate. This is the penultimate step in the biosynthesis of riboflavin. This is 6,7-dimethyl-8-ribityllumazine synthase from Staphylococcus aureus (strain Mu50 / ATCC 700699).